We begin with the raw amino-acid sequence, 185 residues long: Elongation factor P (185 aa).

It belongs to the elongation factor P family.

The protein localises to the cytoplasm. It participates in protein biosynthesis; polypeptide chain elongation. Functionally, involved in peptide bond synthesis. Stimulates efficient translation and peptide-bond synthesis on native or reconstituted 70S ribosomes in vitro. Probably functions indirectly by altering the affinity of the ribosome for aminoacyl-tRNA, thus increasing their reactivity as acceptors for peptidyl transferase. The sequence is that of Elongation factor P from Nitrosomonas europaea (strain ATCC 19718 / CIP 103999 / KCTC 2705 / NBRC 14298).